A 353-amino-acid polypeptide reads, in one-letter code: Nicotinate-nucleotide--dimethylbenzimidazole phosphoribosyltransferase (353 aa).

Glutamate 319 serves as the catalytic Proton acceptor.

Belongs to the CobT family.

The enzyme catalyses 5,6-dimethylbenzimidazole + nicotinate beta-D-ribonucleotide = alpha-ribazole 5'-phosphate + nicotinate + H(+). It participates in nucleoside biosynthesis; alpha-ribazole biosynthesis; alpha-ribazole from 5,6-dimethylbenzimidazole: step 1/2. Functionally, catalyzes the synthesis of alpha-ribazole-5'-phosphate from nicotinate mononucleotide (NAMN) and 5,6-dimethylbenzimidazole (DMB). The chain is Nicotinate-nucleotide--dimethylbenzimidazole phosphoribosyltransferase from Chlorobaculum parvum (strain DSM 263 / NCIMB 8327) (Chlorobium vibrioforme subsp. thiosulfatophilum).